We begin with the raw amino-acid sequence, 304 residues long: Ribosomal RNA large subunit methyltransferase F (304 aa).

The protein belongs to the methyltransferase superfamily. METTL16/RlmF family.

It is found in the cytoplasm. The catalysed reaction is adenosine(1618) in 23S rRNA + S-adenosyl-L-methionine = N(6)-methyladenosine(1618) in 23S rRNA + S-adenosyl-L-homocysteine + H(+). Functionally, specifically methylates the adenine in position 1618 of 23S rRNA. The polypeptide is Ribosomal RNA large subunit methyltransferase F (Klebsiella pneumoniae subsp. pneumoniae (strain ATCC 700721 / MGH 78578)).